Reading from the N-terminus, the 431-residue chain is Peptidase B (431 aa).

Residues lysine 196 and aspartate 201 each coordinate Mn(2+). The active site involves lysine 208. 3 residues coordinate Mn(2+): aspartate 219, aspartate 278, and glutamate 280. Arginine 282 is a catalytic residue.

Belongs to the peptidase M17 family. In terms of assembly, homohexamer. The cofactor is Mn(2+).

Its subcellular location is the cytoplasm. It carries out the reaction Release of an N-terminal amino acid, Xaa, from a peptide or arylamide. Xaa is preferably Glu or Asp but may be other amino acids, including Leu, Met, His, Cys and Gln.. Functionally, probably plays an important role in intracellular peptide degradation. This is Peptidase B from Vibrio atlanticus (strain LGP32) (Vibrio splendidus (strain Mel32)).